The following is a 341-amino-acid chain: N-acetyl-gamma-glutamyl-phosphate reductase (341 aa).

Cysteine 145 is a catalytic residue.

It belongs to the NAGSA dehydrogenase family. Type 1 subfamily.

Its subcellular location is the cytoplasm. It catalyses the reaction N-acetyl-L-glutamate 5-semialdehyde + phosphate + NADP(+) = N-acetyl-L-glutamyl 5-phosphate + NADPH + H(+). The protein operates within amino-acid biosynthesis; L-arginine biosynthesis; N(2)-acetyl-L-ornithine from L-glutamate: step 3/4. In terms of biological role, catalyzes the NADPH-dependent reduction of N-acetyl-5-glutamyl phosphate to yield N-acetyl-L-glutamate 5-semialdehyde. The polypeptide is N-acetyl-gamma-glutamyl-phosphate reductase (Streptomyces clavuligerus).